The following is a 269-amino-acid chain: Hydroxyethylthiazole kinase (269 aa).

Met43 contacts substrate. Arg119 and Ser165 together coordinate ATP. Ala192 is a substrate binding site.

Belongs to the Thz kinase family. Mg(2+) serves as cofactor.

The catalysed reaction is 5-(2-hydroxyethyl)-4-methylthiazole + ATP = 4-methyl-5-(2-phosphooxyethyl)-thiazole + ADP + H(+). Its pathway is cofactor biosynthesis; thiamine diphosphate biosynthesis; 4-methyl-5-(2-phosphoethyl)-thiazole from 5-(2-hydroxyethyl)-4-methylthiazole: step 1/1. In terms of biological role, catalyzes the phosphorylation of the hydroxyl group of 4-methyl-5-beta-hydroxyethylthiazole (THZ). The chain is Hydroxyethylthiazole kinase from Glaesserella parasuis serovar 5 (strain SH0165) (Haemophilus parasuis).